The primary structure comprises 62 residues: Toxin Ct28 (62 aa).

Positions 1–22 (MKAFYGILIILLFCSMFKLNES) are cleaved as a signal peptide. Cystine bridges form between cysteine 29-cysteine 51, cysteine 35-cysteine 56, and cysteine 39-cysteine 58. Asparagine 61 is modified (asparagine amide).

This sequence belongs to the short scorpion toxin superfamily. Potassium channel inhibitor family. Alpha-KTx 02 subfamily. Expressed by the venom gland.

The protein localises to the secreted. Blocks voltage-gated potassium channels. This is Toxin Ct28 from Centruroides tecomanus (Scorpion).